The following is a 523-amino-acid chain: Probable aminopeptidase NPEPL1 (523 aa).

Zn(2+)-binding residues include K260 and D265. K272 is a catalytic residue. D283, D342, and E344 together coordinate Zn(2+). R346 is a catalytic residue.

This sequence belongs to the peptidase M17 family. Zn(2+) serves as cofactor. Requires Mn(2+) as cofactor. Ubiquitously expressed.

In terms of biological role, probably catalyzes the removal of unsubstituted N-terminal amino acids from various peptides. The protein is Probable aminopeptidase NPEPL1 (NPEPL1) of Homo sapiens (Human).